Reading from the N-terminus, the 426-residue chain is 3-phosphoshikimate 1-carboxyvinyltransferase (426 aa).

K20, S21, and R25 together coordinate 3-phosphoshikimate. K20 contacts phosphoenolpyruvate. Residues G92 and R120 each coordinate phosphoenolpyruvate. 4 residues coordinate 3-phosphoshikimate: S165, Q167, D313, and K340. Phosphoenolpyruvate is bound at residue Q167. D313 acts as the Proton acceptor in catalysis. Phosphoenolpyruvate is bound by residues R344 and R386.

It belongs to the EPSP synthase family. Monomer.

Its subcellular location is the cytoplasm. The catalysed reaction is 3-phosphoshikimate + phosphoenolpyruvate = 5-O-(1-carboxyvinyl)-3-phosphoshikimate + phosphate. It functions in the pathway metabolic intermediate biosynthesis; chorismate biosynthesis; chorismate from D-erythrose 4-phosphate and phosphoenolpyruvate: step 6/7. Functionally, catalyzes the transfer of the enolpyruvyl moiety of phosphoenolpyruvate (PEP) to the 5-hydroxyl of shikimate-3-phosphate (S3P) to produce enolpyruvyl shikimate-3-phosphate and inorganic phosphate. This Brevibacillus brevis (strain 47 / JCM 6285 / NBRC 100599) protein is 3-phosphoshikimate 1-carboxyvinyltransferase.